We begin with the raw amino-acid sequence, 714 residues long: Nuclear protein MDM1 (714 aa).

The short motif at 9–15 (SEYQRNF) is the ST]-E-Y-X(3)-F motif 1; required for efficient microtubule binding and stabilization element. The segment at 79–152 (NVVASPEPEA…HTPVNENVEL (74 aa)) is disordered. Ser83 bears the Phosphoserine mark. Basic and acidic residues predominate over residues 93 to 111 (KSQEAEQKDVTQERVHSLE). Phosphoserine is present on residues Ser123 and Ser126. Residues 138-147 (EGVTNHTPVN) are compositionally biased toward polar residues. Residues 189–195 (SEYQRQF) carry the ST]-E-Y-X(3)-F motif 2; required for efficient microtubule binding and stabilization motif. Positions 232-238 (TEYKRNF) match the ST]-E-Y-X(3)-F motif 3; required for efficient microtubule binding and stabilization motif. Phosphoserine is present on residues Ser242 and Ser263. The ST]-E-Y-X(3)-F motif 4; required for efficient microtubule binding and stabilization motif lies at 306 to 312 (SEYRAKF). Ser314 carries the post-translational modification Phosphoserine. The interval 391 to 571 (DLAGDPTSHK…DCLETSKNDF (181 aa)) is disordered. Positions 460-469 (KEEEDDNEEE) are enriched in acidic residues. Residues 482-501 (EQEKLDVREKSKADKMKEGS) are compositionally biased toward basic and acidic residues. Phosphoserine is present on residues Ser560 and Ser584. The interval 616 to 637 (SKIPKYPTNPPGQLPSPPHVPS) is disordered. The segment covering 622-635 (PTNPPGQLPSPPHV) has biased composition (pro residues). Ser648 bears the Phosphoserine mark.

It belongs to the MDM1 family.

It localises to the nucleus. Its subcellular location is the cytoplasm. It is found in the cytoskeleton. The protein localises to the microtubule organizing center. The protein resides in the centrosome. It localises to the centriole. Functionally, microtubule-binding protein that negatively regulates centriole duplication. Binds to and stabilizes microtubules. This chain is Nuclear protein MDM1 (MDM1), found in Homo sapiens (Human).